The following is a 572-amino-acid chain: 2-succinyl-5-enolpyruvyl-6-hydroxy-3-cyclohexene-1-carboxylate synthase (572 aa).

It belongs to the TPP enzyme family. MenD subfamily. In terms of assembly, homodimer. Mg(2+) is required as a cofactor. Mn(2+) serves as cofactor. The cofactor is thiamine diphosphate.

The catalysed reaction is isochorismate + 2-oxoglutarate + H(+) = 5-enolpyruvoyl-6-hydroxy-2-succinyl-cyclohex-3-ene-1-carboxylate + CO2. The protein operates within quinol/quinone metabolism; 1,4-dihydroxy-2-naphthoate biosynthesis; 1,4-dihydroxy-2-naphthoate from chorismate: step 2/7. It functions in the pathway quinol/quinone metabolism; menaquinone biosynthesis. In terms of biological role, catalyzes the thiamine diphosphate-dependent decarboxylation of 2-oxoglutarate and the subsequent addition of the resulting succinic semialdehyde-thiamine pyrophosphate anion to isochorismate to yield 2-succinyl-5-enolpyruvyl-6-hydroxy-3-cyclohexene-1-carboxylate (SEPHCHC). The sequence is that of 2-succinyl-5-enolpyruvyl-6-hydroxy-3-cyclohexene-1-carboxylate synthase from Vibrio campbellii (strain ATCC BAA-1116).